Reading from the N-terminus, the 313-residue chain is Secretory carrier-associated membrane protein 4 (313 aa).

The segment at 1–69 (MAGRSRYDNP…LPPEPADFYN (69 aa)) is disordered. At 1 to 148 (MAGRSRYDNP…EIPVHLQRTQ (148 aa)) the chain is on the cytoplasmic side. Residues 85–116 (MKTREKELLAKEAELNRREKEIKRREEAAARA) are a coiled coil. Transmembrane regions (helical) follow at residues 149-169 (YVAF…IICV), 181-201 (IWFL…YLWY), 216-236 (FGWF…AAVS), and 255-275 (LIGN…MFCL). Over 276-313 (ESLLSMWVIQRVYLYFRGSGKEAEMKREAARSAARAAF) the chain is Cytoplasmic.

Belongs to the SCAMP family.

It is found in the cell membrane. Its subcellular location is the cytoplasmic vesicle. It localises to the secretory vesicle membrane. Its function is as follows. Probably involved in membrane trafficking. The sequence is that of Secretory carrier-associated membrane protein 4 (SCAMP4) from Oryza sativa subsp. japonica (Rice).